Reading from the N-terminus, the 390-residue chain is Nuclear receptor subfamily 2 group F member 6 (390 aa).

Residues 1–15 (MAMVTGGWGGPGGDT) show a composition bias toward gly residues. The segment at 1–50 (MAMVTGGWGGPGGDTNGVDKAGGSYPRATEDDSASPPGATSDAEPGDEER) is disordered. Phosphoserine is present on residues S35 and S41. The segment at residues 54–129 (QVDCVVCGDK…VGMRKEAVQP (76 aa)) is a DNA-binding region (nuclear receptor). NR C4-type zinc fingers lie at residues 57-77 (CVVC…CEGC) and 93-117 (CRSN…LKKC). Residues 157-380 (PVSELIAQLL…TLIRDMLLSG (224 aa)) enclose the NR LBD domain. The segment at 314–390 (LQEKAQVALT…STFNWPYGSG (77 aa)) is important for dimerization.

This sequence belongs to the nuclear hormone receptor family. NR2 subfamily. In terms of assembly, binds DNA as dimer; homodimer and heterodimer with NR2F2 and probably NR2F1. Interacts with THRB.

Its subcellular location is the nucleus. In terms of biological role, transcription factor predominantly involved in transcriptional repression. Binds to promoter/enhancer response elements that contain the imperfect 5'-AGGTCA-3' direct or inverted repeats with various spacings which are also recognized by other nuclear hormone receptors. Involved in modulation of hormonal responses. Represses transcriptional activity of the lutropin-choriogonadotropic hormone receptor/LHCGR gene, the renin/REN gene and the oxytocin-neurophysin/OXT gene. Represses the triiodothyronine-dependent and -independent transcriptional activity of the thyroid hormone receptor gene in a cell type-specific manner. The corepressing function towards thyroid hormone receptor beta/THRB involves at least in part the inhibition of THRB binding to triiodothyronine response elements (TREs) by NR2F6. Inhibits NFATC transcription factor DNA binding and subsequently its transcriptional activity. Acts as transcriptional repressor of IL-17 expression in Th-17 differentiated CD4(+) T cells and may be involved in induction and/or maintenance of peripheral immunological tolerance and autoimmunity. Involved in development of forebrain circadian clock; is required early in the development of the locus coeruleus (LC). The chain is Nuclear receptor subfamily 2 group F member 6 (Nr2f6) from Rattus norvegicus (Rat).